The primary structure comprises 366 residues: 5-hydroxytryptamine receptor 1F (366 aa).

Over 1 to 24 (MDFLNSSDQNLTSEELLNRMPSKI) the chain is Extracellular. N5 and N10 each carry an N-linked (GlcNAc...) asparagine glycan. A helical transmembrane segment spans residues 25 to 49 (LVSLTLSGLALMTTTINCLVITAII). The Cytoplasmic segment spans residues 50–59 (VTRKLHHPAN). A helical membrane pass occupies residues 60–81 (YLICSLAVTDFLVAVLVMPFSI). The Extracellular portion of the chain corresponds to 82–96 (VYIVRESWIMGQGLC). C96 and C172 are disulfide-bonded. Residues 97–119 (DLWLSVDIICCTCSILHLSAIAL) traverse the membrane as a helical segment. Residues D103 and C107 each contribute to the serotonin site. A DRY motif; important for ligand-induced conformation changes motif is present at residues 120-122 (DRY). At 120-139 (DRYRAITDAVEYARKRTPRH) the chain is on the cytoplasmic side. Residues 140–159 (AGITITTVWVISVFISVPPL) traverse the membrane as a helical segment. The Extracellular segment spans residues 160–178 (FWRHQGNSRDDQCIIKHDH). The chain crosses the membrane as a helical span at residues 179–202 (IVSTIYSTFGAFYIPLVLILILYY). The Cytoplasmic segment spans residues 203 to 291 (KIYRAARTLY…KISGTRERKA (89 aa)). Residues 292 to 315 (ATTLGLILGAFVICWLPFFVKELV) traverse the membrane as a helical segment. At 316 to 327 (VNICEKCKISEE) the chain is on the extracellular side. The helical transmembrane segment at 328–350 (MSNFLAWLGYLNSLINPLIYTIF) threads the bilayer. The short motif at 343-347 (NPLIY) is the NPxxY motif; important for ligand-induced conformation changes and signaling element. Residues 351–366 (NEDFKKAFQKLVRCRN) are Cytoplasmic-facing.

It belongs to the G-protein coupled receptor 1 family.

It localises to the cell membrane. Functionally, G-protein coupled receptor for 5-hydroxytryptamine (serotonin). Also functions as a receptor for various alkaloids and psychoactive substances. Ligand binding causes a conformation change that triggers signaling via guanine nucleotide-binding proteins (G proteins) and modulates the activity of downstream effectors, such as adenylate cyclase. HTR1F is coupled to G(i)/G(o) G alpha proteins and mediates inhibitory neurotransmission by inhibiting adenylate cyclase activity. This Rattus norvegicus (Rat) protein is 5-hydroxytryptamine receptor 1F (Htr1f).